The sequence spans 385 residues: Leucine aminopeptidase 1 (385 aa).

Positions 1–20 (MKLPSLLSLGVAASTTIVAA) are cleaved as a signal peptide. Residues 21–87 (VPDQKPIGDT…FPKTFAQTTV (67 aa)) constitute a propeptide that is removed on maturation. N177 is a glycosylation site (N-linked (GlcNAc...) asparagine). 4 residues coordinate Zn(2+): H185, D204, E243, and D270. Cysteines 319 and 323 form a disulfide. Position 352 (H352) interacts with Zn(2+).

Belongs to the peptidase M28 family. M28E subfamily. In terms of assembly, monomer. It depends on Zn(2+) as a cofactor.

The protein resides in the secreted. Its function is as follows. Extracellular aminopeptidase that allows assimilation of proteinaceous substrates. The chain is Leucine aminopeptidase 1 (LAP1) from Ajellomyces capsulatus (strain NAm1 / WU24) (Darling's disease fungus).